A 183-amino-acid chain; its full sequence is MNKLIPVPREFFARDTNVVSTELIGKALYFQGKTAIITETESYIGQNDPACHAARGRTKRTDIMFGPAGFSYVYLIYGMYYCLNFVTEAKGFPAATLIRGVHVILPENLYLNGPGKLCKYLGINISHNKCDLINNNEFFVGDIGLKLPYSTTARIGITKGTDKLWRYVVTDITNLISQYNVQP.

Belongs to the DNA glycosylase MPG family.

The protein is Putative 3-methyladenine DNA glycosylase of Rickettsia conorii (strain ATCC VR-613 / Malish 7).